The following is a 517-amino-acid chain: Glycerol kinase 5 (517 aa).

ATP-binding residues include Ser-23 and Thr-24. Glycerol is bound by residues Arg-93, Asp-270, and Gln-271. 3 residues coordinate ATP: Thr-292, Gly-335, and Gly-432.

The protein belongs to the FGGY kinase family.

It localises to the cytoplasm. The enzyme catalyses glycerol + ATP = sn-glycerol 3-phosphate + ADP + H(+). The protein operates within polyol metabolism; glycerol degradation via glycerol kinase pathway; sn-glycerol 3-phosphate from glycerol: step 1/1. Its function is as follows. Skin-specific kinase that plays a key role in glycerol metabolism, catalyzing its phosphorylation to produce sn-glycerol 3-phosphate. Involved in skin-specific regulation of sterol regulatory element-binding protein (SREBP) processing and lipid biosynthesis. The chain is Glycerol kinase 5 (GK5) from Gallus gallus (Chicken).